The primary structure comprises 597 residues: Phosphoinositide phospholipase C 4 (597 aa).

The EF-hand domain maps to 26-60; sequence GPVEDVRDLFEKYTEGDAHMSPEQLQKLMTEEGGE. The region spanning 114–257 is the PI-PLC X-box domain; sequence QNMDAPLSHY…LKEKILISTK (144 aa). Catalysis depends on residues H129 and H174. Residues 259–290 show a composition bias toward basic and acidic residues; that stretch reads PKEYLEANDTKEKDNGEKGKDSDEDVWGKEPE. Positions 259–324 are disordered; sequence PKEYLEANDT…ERGSCESDTS (66 aa). The segment covering 293–309 has biased composition (polar residues); it reads ISTQSDLDKVTSSVNDL. A PI-PLC Y-box domain is found at 333–449; the sequence is KRLIAIHAGK…GYVKKPDFLM (117 aa). The 131-residue stretch at 449–579 folds into the C2 domain; it reads MDASPNGQDF…QGIRAVPLFN (131 aa).

Ca(2+) is required as a cofactor. As to expression, low expression in leaves, roots, flowers and siliques. Expressed in pollen and in cells of the stigma surface.

Its subcellular location is the cytoplasm. The protein localises to the cytosol. The protein resides in the cell membrane. The catalysed reaction is a 1,2-diacyl-sn-glycero-3-phospho-(1D-myo-inositol-4,5-bisphosphate) + H2O = 1D-myo-inositol 1,4,5-trisphosphate + a 1,2-diacyl-sn-glycerol + H(+). The production of the second messenger molecules diacylglycerol (DAG) and inositol 1,4,5-trisphosphate (IP3) is mediated by activated phosphatidylinositol-specific phospholipase C enzymes. This Arabidopsis thaliana (Mouse-ear cress) protein is Phosphoinositide phospholipase C 4 (PLC4).